We begin with the raw amino-acid sequence, 343 residues long: MFGGAKGGHFGVPPAGCSGAVSQAAAGTKAGPAGGRPADTMWRLRCKAKGGTHVLQGLSNRTRLRELQGQIAAITGIAPGSQRILVGYPPECLDLSDRDITLGDLPIQSGDMLIVEEDQTRPKASPAFSKHGAPSYVRETLPVLTRTAVPADNSCLFTSVYYVVEGGVLNPACAPEMRRLIAQIVASDPDLYSEAILGKTNEEYCDWIRRDDTWGGAIEISILSKFYQCEICVVDTQTVRIDRFGEDAGYTKRVLLIYDGIHYDPLQRNFPDPDTPPLTIFSSNDDIVLVQALELADEARRKRQFTDVNRFTLRCMLCQKGLTGQAEARDHARETGHTNFGEV.

The segment at arginine 45–lysine 123 is UBX-like. Residues leucine 144–asparagine 269 enclose the OTU domain. The segment at valine 149 to cysteine 155 is cys-loop. Residue aspartate 152 is part of the active site. The active-site Nucleophile is the cysteine 155. The variable-loop stretch occupies residues isoleucine 208–isoleucine 218. Residues tyrosine 258–histidine 262 form a his-loop region. Isoleucine 261 serves as a coordination point for substrate. The active site involves histidine 262. Positions aspartate 286–glutamine 291 are S2 site. Residues leucine 313–histidine 337 form a C2H2-type zinc finger. Residue histidine 337 is part of the active site.

As to quaternary structure, interacts with VCP; the interaction is direct. Interacts with FAF2/UBXD8. Interacts with DERL1; however interaction is dependent on the UBAX-like region, suggesting that it may be indirect. Interacts with PLAA, UBXN6 and VCP; may form a complex involved in macroautophagy.

Its subcellular location is the cytoplasm. The catalysed reaction is Thiol-dependent hydrolysis of ester, thioester, amide, peptide and isopeptide bonds formed by the C-terminal Gly of ubiquitin (a 76-residue protein attached to proteins as an intracellular targeting signal).. Functionally, hydrolase that can remove conjugated ubiquitin from proteins and participates in endoplasmic reticulum-associated degradation (ERAD) for misfolded lumenal proteins. May act by triming the ubiquitin chain on the associated substrate to facilitate their threading through the VCP/p97 pore. Ubiquitin moieties on substrates may present a steric impediment to the threading process when the substrate is transferred to the VCP pore and threaded through VCP's axial channel. Mediates deubiquitination of 'Lys-27'-, 'Lys-29'- and 'Lys-33'-linked polyubiquitin chains. Also able to hydrolyze 'Lys-11'-linked ubiquitin chains. Cleaves both polyubiquitin and di-ubiquitin. May play a role in macroautophagy, regulating for instance the clearance of damaged lysosomes. May recruit PLAA, UBXN6 and VCP to damaged lysosome membranes decorated with K48-linked ubiquitin chains and remove these chains allowing autophagosome formation. The protein is Ubiquitin thioesterase OTU1 (Yod1) of Rattus norvegicus (Rat).